Here is a 278-residue protein sequence, read N- to C-terminus: Large ribosomal subunit protein uL2c (278 aa).

2 disordered regions span residues 32–56 (SLTS…HRGG) and 203–256 (QSIG…PTIG). A compositionally biased stretch (basic residues) spans 209-220 (GSKRWQGKRPKV).

It belongs to the universal ribosomal protein uL2 family. As to quaternary structure, part of the 50S ribosomal subunit.

It localises to the plastid. Its subcellular location is the chloroplast. The polypeptide is Large ribosomal subunit protein uL2c (rpl2) (Chara vulgaris (Common stonewort)).